We begin with the raw amino-acid sequence, 181 residues long: uncharacterized protein (181 aa).

Residues 1 to 14 lie on the Cytoplasmic side of the membrane; sequence MQKCIMRSTEFKTH. The chain crosses the membrane as a helical span at residues 15–35; the sequence is FSFHSIFSFPLSAALLALISA. Topologically, residues 36–58 are extracellular; it reads SEPASKAFINVQFISSPLVKKEV. A helical membrane pass occupies residues 59 to 79; that stretch reads LPFIVSFHSLSSNGILSFSPF. Residues 80 to 84 lie on the Cytoplasmic side of the membrane; that stretch reads TSSNL. The chain crosses the membrane as a helical span at residues 85-105; sequence SIAQLPFLIKVPLLSMGSLAL. Topologically, residues 106-116 are extracellular; it reads ENFNKFIPRAD. Residues 117–137 form a helical membrane-spanning segment; the sequence is LVAAWVTIIMVFTFGNFLSTL. Over 138-153 the chain is Cytoplasmic; the sequence is SIKTGQNLWHLSKISS. Residues 154 to 174 form a helical membrane-spanning segment; that stretch reads SVSPLLLGIILGSQSGEIMLG. Residues 175–181 are Extracellular-facing; the sequence is KNLLITS.

Its subcellular location is the membrane. This is an uncharacterized protein from Saccharomyces cerevisiae (strain ATCC 204508 / S288c) (Baker's yeast).